Consider the following 178-residue polypeptide: ATP synthase subunit delta (178 aa).

The protein belongs to the ATPase delta chain family. As to quaternary structure, F-type ATPases have 2 components, F(1) - the catalytic core - and F(0) - the membrane proton channel. F(1) has five subunits: alpha(3), beta(3), gamma(1), delta(1), epsilon(1). F(0) has three main subunits: a(1), b(2) and c(10-14). The alpha and beta chains form an alternating ring which encloses part of the gamma chain. F(1) is attached to F(0) by a central stalk formed by the gamma and epsilon chains, while a peripheral stalk is formed by the delta and b chains.

Its subcellular location is the cell inner membrane. F(1)F(0) ATP synthase produces ATP from ADP in the presence of a proton or sodium gradient. F-type ATPases consist of two structural domains, F(1) containing the extramembraneous catalytic core and F(0) containing the membrane proton channel, linked together by a central stalk and a peripheral stalk. During catalysis, ATP synthesis in the catalytic domain of F(1) is coupled via a rotary mechanism of the central stalk subunits to proton translocation. Its function is as follows. This protein is part of the stalk that links CF(0) to CF(1). It either transmits conformational changes from CF(0) to CF(1) or is implicated in proton conduction. In Methylococcus capsulatus (strain ATCC 33009 / NCIMB 11132 / Bath), this protein is ATP synthase subunit delta.